A 601-amino-acid chain; its full sequence is Elongation factor 4 (601 aa).

Residues 8-189 (EQIRNFGIIA…LIVRKAPPPK (182 aa)) enclose the tr-type G domain. Position 20–25 (20–25 (DHGKST)) interacts with GTP.

Belongs to the TRAFAC class translation factor GTPase superfamily. Classic translation factor GTPase family. LepA subfamily.

The protein localises to the cell membrane. It catalyses the reaction GTP + H2O = GDP + phosphate + H(+). Functionally, required for accurate and efficient protein synthesis under certain stress conditions. May act as a fidelity factor of the translation reaction, by catalyzing a one-codon backward translocation of tRNAs on improperly translocated ribosomes. Back-translocation proceeds from a post-translocation (POST) complex to a pre-translocation (PRE) complex, thus giving elongation factor G a second chance to translocate the tRNAs correctly. Binds to ribosomes in a GTP-dependent manner. The chain is Elongation factor 4 from Tropheryma whipplei (strain TW08/27) (Whipple's bacillus).